The chain runs to 284 residues: Lipoyl synthase (284 aa).

Residues Cys38, Cys43, Cys49, Cys64, Cys68, Cys71, and Ser277 each contribute to the [4Fe-4S] cluster site. One can recognise a Radical SAM core domain in the interval 50–266; the sequence is WSRGTATFLL…RDEALGMGFS (217 aa).

The protein belongs to the radical SAM superfamily. Lipoyl synthase family. It depends on [4Fe-4S] cluster as a cofactor.

Its subcellular location is the cytoplasm. The enzyme catalyses [[Fe-S] cluster scaffold protein carrying a second [4Fe-4S](2+) cluster] + N(6)-octanoyl-L-lysyl-[protein] + 2 oxidized [2Fe-2S]-[ferredoxin] + 2 S-adenosyl-L-methionine + 4 H(+) = [[Fe-S] cluster scaffold protein] + N(6)-[(R)-dihydrolipoyl]-L-lysyl-[protein] + 4 Fe(3+) + 2 hydrogen sulfide + 2 5'-deoxyadenosine + 2 L-methionine + 2 reduced [2Fe-2S]-[ferredoxin]. The protein operates within protein modification; protein lipoylation via endogenous pathway; protein N(6)-(lipoyl)lysine from octanoyl-[acyl-carrier-protein]: step 2/2. Its function is as follows. Catalyzes the radical-mediated insertion of two sulfur atoms into the C-6 and C-8 positions of the octanoyl moiety bound to the lipoyl domains of lipoate-dependent enzymes, thereby converting the octanoylated domains into lipoylated derivatives. This Chlorobium phaeovibrioides (strain DSM 265 / 1930) (Prosthecochloris vibrioformis (strain DSM 265)) protein is Lipoyl synthase.